Reading from the N-terminus, the 333-residue chain is Flotillin-like protein FloA (333 aa).

A helical transmembrane segment spans residues 10–30 (IFLIAGGIIFLVLFFHYVPFF).

Belongs to the flotillin-like FloA family. In terms of assembly, homooligomerizes.

The protein localises to the cell membrane. The protein resides in the membrane raft. Found in functional membrane microdomains (FMM) that may be equivalent to eukaryotic membrane rafts. FMMs are highly dynamic and increase in number as cells age. Flotillins are thought to be important factors in membrane fluidity. The sequence is that of Flotillin-like protein FloA from Bacteroides fragilis (strain ATCC 25285 / DSM 2151 / CCUG 4856 / JCM 11019 / LMG 10263 / NCTC 9343 / Onslow / VPI 2553 / EN-2).